Here is a 566-residue protein sequence, read N- to C-terminus: E3 ubiquitin-protein ligase RNF220 (566 aa).

A Glycyl lysine isopeptide (Lys-Gly) (interchain with G-Cter in SUMO2) cross-link involves residue lysine 277. The tract at residues 277–297 is disordered; the sequence is KREGESPTASPHSSATDDLHH. Residue serine 390 is modified to Phosphoserine. Positions 485-513 form a coiled coil; the sequence is EDSAVTTFEALKARVRELERQLSRGDRYK. Positions 514–522 are required for targeting to the cytoplasm; sequence CLICMDSYS. The RING-type zinc finger occupies 514–553; the sequence is CLICMDSYSMPLTSIQCWHVHCEECWLRTLGAKKLCPQCN.

In terms of assembly, interacts with SIN3B. Interacts with CTNNB1 (via Armadillo repeats 2-8). Interacts with USP7 (via MATH domain). Auto-ubiquitinated; leads to proteasomal degradation.

It localises to the cytoplasm. The protein localises to the nucleus. The catalysed reaction is S-ubiquitinyl-[E2 ubiquitin-conjugating enzyme]-L-cysteine + [acceptor protein]-L-lysine = [E2 ubiquitin-conjugating enzyme]-L-cysteine + N(6)-ubiquitinyl-[acceptor protein]-L-lysine.. It participates in protein modification; protein ubiquitination. Its function is as follows. E3 ubiquitin-protein ligase that promotes the ubiquitination and proteasomal degradation of SIN3B. Independently of its E3 ligase activity, acts as a CTNNB1 stabilizer through USP7-mediated deubiquitination of CTNNB1 and promotes Wnt signaling. Plays a critical role in the regulation of nuclear lamina. The sequence is that of E3 ubiquitin-protein ligase RNF220 (RNF220) from Macaca fascicularis (Crab-eating macaque).